A 121-amino-acid chain; its full sequence is Cell division protein FtsB (121 aa).

Residues Met-1–Trp-6 are Cytoplasmic-facing. Residues Leu-7–Phe-24 form a helical membrane-spanning segment. The Periplasmic segment spans residues Gly-25–Pro-121. Positions Glu-31–Gly-66 form a coiled coil. The tract at residues Pro-98 to Pro-121 is disordered.

The protein belongs to the FtsB family. In terms of assembly, part of a complex composed of FtsB, FtsL and FtsQ.

The protein localises to the cell inner membrane. Essential cell division protein. May link together the upstream cell division proteins, which are predominantly cytoplasmic, with the downstream cell division proteins, which are predominantly periplasmic. In Xanthomonas campestris pv. campestris (strain 8004), this protein is Cell division protein FtsB.